The chain runs to 116 residues: Spexin (116 aa).

A signal peptide spans 1–26 (MKGPSVLAVTAVVLLLVLSALENSSG). Residues 27-35 (APQRLSEKR) constitute a propeptide that is removed on maturation. Glutamine amide is present on Q49. 2 consecutive propeptides follow at residues 50 to 116 (GRRF…LFNW) and 74 to 116 (PDLE…LFNW). Residues 52–77 (RFLSDQSRRKELADRPPPERRNPDLE) form a disordered region. Over residues 53–75 (FLSDQSRRKELADRPPPERRNPD) the composition is skewed to basic and acidic residues.

It belongs to the spexin family.

It localises to the secreted. The protein localises to the extracellular space. It is found in the cytoplasmic vesicle. The protein resides in the secretory vesicle. Its function is as follows. Plays a role as a central modulator of cardiovascular and renal function and nociception. Also plays a role in energy metabolism and storage. Inhibits adrenocortical cell proliferation with minor stimulation on corticosteroid release. In terms of biological role, acts as a ligand for galanin receptors GALR2 and GALR3. Intracerebroventricular administration of the peptide induces an increase in arterial blood pressure, a decrease in both heart rate and renal excretion and delayed natriuresis. Intraventricular administration of the peptide induces antinociceptive activity. Also induces contraction of muscarinic-like stomach smooth muscles. Intraperitoneal administration of the peptide induces a reduction in food consumption and body weight. Inhibits long chain fatty acid uptake into adipocytes. Intracerebroventricular administration of the peptide induces a decrease in heart rate, but no change in arterial pressure, and an increase in urine flow rate. Intraventricular administration of the peptide induces antinociceptive activity. The sequence is that of Spexin (Spx) from Mus musculus (Mouse).